A 420-amino-acid polypeptide reads, in one-letter code: MRWRTIQARYCFLLVPCVLTALEAVPIDVDKTKVHNVEPVESARIEPPDTGLYYDEYLKQVIEVLETDPHFREKLQKADIEEIRSGRLSQELDLVSHKVRTRLDELKRQEVGRLRMLIKAKLDALQDTGMNHHLLLKQFEHLNHQNPDTFESKDLDMLIKAATADLEQYDRTRHEEFKKYEMMKEHERREYLKTLSEEKRKEEEAKFAEMKRKHEDHPKVNHPGSKDQLKEVWEETDGLDPNDFDPKTFFKLHDVNNDGFLDEQELEALFTKELDKVYNPQNAEDDMIEMEEERLRMREHVMNEIDNNKDRLVTLEEFLRATEKKEFLEPDSWETLDQQQLFTEEELKEYESIIAIQESELKKKADELQKQKEELQRQHDHLEAQKQEYQQAVQQLEQKKFQQGIAPSGPAGELKFEPHT.

The signal sequence occupies residues 1 to 24 (MRWRTIQARYCFLLVPCVLTALEA). The DNA-binding element occupies 171–223 (RTRHEEFKKYEMMKEHERREYLKTLSEEKRKEEEAKFAEMKRKHEDHPKVNHP). The segment at 194-225 (TLSEEKRKEEEAKFAEMKRKHEDHPKVNHPGS) is disordered. The segment at 213–420 (KHEDHPKVNH…AGELKFEPHT (208 aa)) is binds to necdin. EF-hand domains follow at residues 241-276 (PNDF…ELDK) and 293-328 (ERLR…KEFL). Asp-254, Asn-256, Asp-258, Glu-265, Asp-306, Asn-308, Asp-310, and Glu-317 together coordinate Ca(2+). Positions 304-334 (EIDNNKDRLVTLEEFLRATEKKEFLEPDSWE) match the GBA motif. Ser-332 carries the phosphoserine modification. Basic and acidic residues predominate over residues 366-386 (DELQKQKEELQRQHDHLEAQK). The segment at 366 to 420 (DELQKQKEELQRQHDHLEAQKQEYQQAVQQLEQKKFQQGIAPSGPAGELKFEPHT) is disordered. Low complexity predominate over residues 387–396 (QEYQQAVQQL).

Belongs to the nucleobindin family. In terms of assembly, interacts (via GBA motif) with guanine nucleotide-binding protein G(i) alpha subunit GNAI3. Preferentially interacts with inactive rather than active GNAI3. Interaction with GNAI3 is inhibited when NUCB2 binds calcium, probably due to a conformational change which renders the GBA motif inaccessible. Binds to the postmitotic growth suppressor NDN; coexpression abolishes NUCB2 secretion. Interacts with MC4R.

Its subcellular location is the golgi apparatus. It is found in the endoplasmic reticulum. The protein resides in the nucleus envelope. It localises to the membrane. The protein localises to the cytoplasm. Its subcellular location is the secreted. In terms of biological role, calcium-binding protein which may have a role in calcium homeostasis. Acts as a non-receptor guanine nucleotide exchange factor which binds to and activates guanine nucleotide-binding protein (G-protein) alpha subunit GNAI3. Anorexigenic peptide, seems to play an important role in hypothalamic pathways regulating food intake and energy homeostasis, acting in a leptin-independent manner. May also exert hypertensive roles and modulate blood pressure through directly acting on peripheral arterial resistance. In intestinal epithelial cells, plays a role in the inhibition of hepatic glucose production via MC4R receptor leading to increased cyclic adenosine monophosphate (cAMP) levels and glucagon-like peptide 1 (GLP-1) secretion. This chain is Nucleobindin-2 (Nucb2), found in Rattus norvegicus (Rat).